Here is a 335-residue protein sequence, read N- to C-terminus: Glycerol-3-phosphate dehydrogenase [NAD(P)+] (335 aa).

NADPH is bound by residues Trp-12 and Lys-106. The sn-glycerol 3-phosphate site is built by Lys-106, Gly-136, and Ser-138. Ala-140 serves as a coordination point for NADPH. Sn-glycerol 3-phosphate contacts are provided by Lys-191, Asp-244, Ser-254, Arg-255, and Asn-256. Residue Lys-191 is the Proton acceptor of the active site. Arg-255 serves as a coordination point for NADPH. Positions 279 and 281 each coordinate NADPH.

It belongs to the NAD-dependent glycerol-3-phosphate dehydrogenase family.

The protein resides in the cytoplasm. It carries out the reaction sn-glycerol 3-phosphate + NAD(+) = dihydroxyacetone phosphate + NADH + H(+). The catalysed reaction is sn-glycerol 3-phosphate + NADP(+) = dihydroxyacetone phosphate + NADPH + H(+). Its pathway is membrane lipid metabolism; glycerophospholipid metabolism. In terms of biological role, catalyzes the reduction of the glycolytic intermediate dihydroxyacetone phosphate (DHAP) to sn-glycerol 3-phosphate (G3P), the key precursor for phospholipid synthesis. The chain is Glycerol-3-phosphate dehydrogenase [NAD(P)+] from Fusobacterium nucleatum subsp. nucleatum (strain ATCC 25586 / DSM 15643 / BCRC 10681 / CIP 101130 / JCM 8532 / KCTC 2640 / LMG 13131 / VPI 4355).